The primary structure comprises 364 residues: Fructose-bisphosphate aldolase A (364 aa).

Position 5 is a phosphotyrosine (Y5). T9 is subject to Phosphothreonine. Residues S36 and S39 each carry the phosphoserine modification. At K42 the chain carries N6-acetyllysine; alternate. K42 is covalently cross-linked (Glycyl lysine isopeptide (Lys-Gly) (interchain with G-Cter in SUMO1); alternate). K42 is covalently cross-linked (Glycyl lysine isopeptide (Lys-Gly) (interchain with G-Cter in SUMO2); alternate). R43 serves as a coordination point for beta-D-fructose 1,6-bisphosphate. At S46 the chain carries Phosphoserine. Residue K99 is modified to N6-(2-hydroxyisobutyryl)lysine. K108 carries the N6-acetyllysine modification. At K111 the chain carries N6-acetyllysine; alternate. The residue at position 111 (K111) is an N6-malonyllysine; alternate. S132 is subject to Phosphoserine. K147 is modified (N6-(2-hydroxyisobutyryl)lysine). Residue E188 is the Proton acceptor of the active site. K230 acts as the Schiff-base intermediate with dihydroxyacetone-P in catalysis. S272 carries the post-translational modification Phosphoserine. Residues 272-274, S301, and R304 each bind beta-D-fructose 1,6-bisphosphate; that span reads SGG. Position 312 is an N6-malonyllysine (K312). Position 330 is an N6-acetyllysine (K330).

It belongs to the class I fructose-bisphosphate aldolase family. Homotetramer. Interacts with SNX9 and WAS. Interacts with FBP2; the interaction blocks FBP2 inhibition by physiological concentrations of AMP and reduces inhibition by Ca(2+).

The protein resides in the cytoplasm. The protein localises to the myofibril. It is found in the sarcomere. It localises to the i band. Its subcellular location is the m line. The catalysed reaction is beta-D-fructose 1,6-bisphosphate = D-glyceraldehyde 3-phosphate + dihydroxyacetone phosphate. The protein operates within carbohydrate degradation; glycolysis; D-glyceraldehyde 3-phosphate and glycerone phosphate from D-glucose: step 4/4. Functionally, catalyzes the reversible conversion of beta-D-fructose 1,6-bisphosphate (FBP) into two triose phosphate and plays a key role in glycolysis and gluconeogenesis. In addition, may also function as scaffolding protein. The chain is Fructose-bisphosphate aldolase A (Aldoa) from Mus musculus (Mouse).